Reading from the N-terminus, the 65-residue chain is Large ribosomal subunit protein bL35 (65 aa).

The protein belongs to the bacterial ribosomal protein bL35 family.

This chain is Large ribosomal subunit protein bL35, found in Nitrosomonas eutropha (strain DSM 101675 / C91 / Nm57).